A 60-amino-acid chain; its full sequence is Potassium channel toxin alpha-KTx 12.5 (60 aa).

The first 22 residues, 1 to 22 (MNKLPILIFMLLVCSMFISSDC), serve as a signal peptide directing secretion. 3 disulfide bridges follow: Cys-30-Cys-51, Cys-36-Cys-56, and Cys-40-Cys-58.

It belongs to the short scorpion toxin superfamily. Potassium channel inhibitor family. Alpha-KTx 12 subfamily. In terms of tissue distribution, expressed by the venom gland.

The protein resides in the secreted. Functionally, this recombinant toxin inhibits the mammalian voltage-gated potassium channels Kv1.3/KCNA3 (IC(50)=28 nM). Kv1.1/KCNA1 and Kv1.2/KCNA2 potassium channels are also weakly inhibited (IC(50)=1.73 uM and IC(50)=12.63 uM, respectively). This chain is Potassium channel toxin alpha-KTx 12.5, found in Lychas mucronatus (Chinese swimming scorpion).